The primary structure comprises 370 residues: 3-isopropylmalate dehydrogenase (370 aa).

77–90 (GPKWDGVPYEHRPE) provides a ligand contact to NAD(+). Substrate contacts are provided by R97, R107, R135, and D226. The Mg(2+) site is built by D226, D250, and D254. Position 290–302 (290–302 (GSAPDIAGKSIAN)) interacts with NAD(+).

Belongs to the isocitrate and isopropylmalate dehydrogenases family. LeuB type 1 subfamily. Homodimer. Requires Mg(2+) as cofactor. Mn(2+) serves as cofactor.

Its subcellular location is the cytoplasm. It catalyses the reaction (2R,3S)-3-isopropylmalate + NAD(+) = 4-methyl-2-oxopentanoate + CO2 + NADH. It functions in the pathway amino-acid biosynthesis; L-leucine biosynthesis; L-leucine from 3-methyl-2-oxobutanoate: step 3/4. Catalyzes the oxidation of 3-carboxy-2-hydroxy-4-methylpentanoate (3-isopropylmalate) to 3-carboxy-4-methyl-2-oxopentanoate. The product decarboxylates to 4-methyl-2 oxopentanoate. In Agrobacterium fabrum (strain C58 / ATCC 33970) (Agrobacterium tumefaciens (strain C58)), this protein is 3-isopropylmalate dehydrogenase (leuB).